We begin with the raw amino-acid sequence, 120 residues long: NAD(P)H-quinone oxidoreductase subunit 3, chloroplastic (120 aa).

A run of 3 helical transmembrane segments spans residues 9 to 29, 64 to 84, and 88 to 108; these read IFWA…LISG, MFAL…PWAM, and VLGV…IVGS.

It belongs to the complex I subunit 3 family. In terms of assembly, NDH is composed of at least 16 different subunits, 5 of which are encoded in the nucleus.

It localises to the plastid. The protein localises to the chloroplast thylakoid membrane. It carries out the reaction a plastoquinone + NADH + (n+1) H(+)(in) = a plastoquinol + NAD(+) + n H(+)(out). The enzyme catalyses a plastoquinone + NADPH + (n+1) H(+)(in) = a plastoquinol + NADP(+) + n H(+)(out). NDH shuttles electrons from NAD(P)H:plastoquinone, via FMN and iron-sulfur (Fe-S) centers, to quinones in the photosynthetic chain and possibly in a chloroplast respiratory chain. The immediate electron acceptor for the enzyme in this species is believed to be plastoquinone. Couples the redox reaction to proton translocation, and thus conserves the redox energy in a proton gradient. The polypeptide is NAD(P)H-quinone oxidoreductase subunit 3, chloroplastic (Liriodendron tulipifera (Tuliptree)).